Reading from the N-terminus, the 400-residue chain is Argininosuccinate synthase (400 aa).

ATP is bound at residue 9–17; it reads AYSGGLDTS. Tyrosine 87 is an L-citrulline binding site. Glycine 117 provides a ligand contact to ATP. L-aspartate contacts are provided by threonine 119, asparagine 123, and aspartate 124. Position 123 (asparagine 123) interacts with L-citrulline. Residues arginine 127, serine 176, serine 185, glutamate 261, and tyrosine 273 each coordinate L-citrulline.

The protein belongs to the argininosuccinate synthase family. Type 1 subfamily. Homotetramer.

The protein localises to the cytoplasm. The enzyme catalyses L-citrulline + L-aspartate + ATP = 2-(N(omega)-L-arginino)succinate + AMP + diphosphate + H(+). It participates in amino-acid biosynthesis; L-arginine biosynthesis; L-arginine from L-ornithine and carbamoyl phosphate: step 2/3. This is Argininosuccinate synthase from Chlorobium limicola (strain DSM 245 / NBRC 103803 / 6330).